Reading from the N-terminus, the 591-residue chain is Probable methyltransferase PMT6 (591 aa).

Topologically, residues 1 to 13 (MRGSVIGAERSGQ) are cytoplasmic. The helical; Signal-anchor for type II membrane protein transmembrane segment at 14-34 (TIMVALVLMVGSFYTGSLFGT) threads the bilayer. At 35–591 (NQPIYVSHPS…FCRKRFWAII (557 aa)) the chain is on the lumenal side. Asn-87, Asn-99, Asn-146, Asn-193, Asn-323, Asn-436, Asn-473, and Asn-515 each carry an N-linked (GlcNAc...) asparagine glycan.

Belongs to the methyltransferase superfamily.

The protein resides in the endoplasmic reticulum membrane. This chain is Probable methyltransferase PMT6, found in Arabidopsis thaliana (Mouse-ear cress).